A 335-amino-acid polypeptide reads, in one-letter code: Nucleoid-associated protein YejK (335 aa).

Belongs to the YejK family.

The protein localises to the cytoplasm. It is found in the nucleoid. The chain is Nucleoid-associated protein YejK from Shigella dysenteriae serotype 1 (strain Sd197).